The sequence spans 350 residues: Holliday junction branch migration complex subunit RuvB (350 aa).

The tract at residues 1 to 183 (MSAERLVNPH…FVAVHRLVFY (183 aa)) is large ATPase domain (RuvB-L). Residues Leu-22, Arg-23, Gly-64, Lys-67, Thr-68, Ser-69, 130–132 (EDF), Arg-173, Tyr-183, and Arg-220 contribute to the ATP site. Thr-68 is a Mg(2+) binding site. The interval 184–254 (SDAAMTEIVS…VAREALAQLE (71 aa)) is small ATPAse domain (RuvB-S). Residues 257–350 (ELGLDENDRR…ESGPQQGTLF (94 aa)) form a head domain (RuvB-H) region. 2 residues coordinate DNA: Arg-312 and Arg-317.

It belongs to the RuvB family. As to quaternary structure, homohexamer. Forms an RuvA(8)-RuvB(12)-Holliday junction (HJ) complex. HJ DNA is sandwiched between 2 RuvA tetramers; dsDNA enters through RuvA and exits via RuvB. An RuvB hexamer assembles on each DNA strand where it exits the tetramer. Each RuvB hexamer is contacted by two RuvA subunits (via domain III) on 2 adjacent RuvB subunits; this complex drives branch migration. In the full resolvosome a probable DNA-RuvA(4)-RuvB(12)-RuvC(2) complex forms which resolves the HJ.

It is found in the cytoplasm. It carries out the reaction ATP + H2O = ADP + phosphate + H(+). Its function is as follows. The RuvA-RuvB-RuvC complex processes Holliday junction (HJ) DNA during genetic recombination and DNA repair, while the RuvA-RuvB complex plays an important role in the rescue of blocked DNA replication forks via replication fork reversal (RFR). RuvA specifically binds to HJ cruciform DNA, conferring on it an open structure. The RuvB hexamer acts as an ATP-dependent pump, pulling dsDNA into and through the RuvAB complex. RuvB forms 2 homohexamers on either side of HJ DNA bound by 1 or 2 RuvA tetramers; 4 subunits per hexamer contact DNA at a time. Coordinated motions by a converter formed by DNA-disengaged RuvB subunits stimulates ATP hydrolysis and nucleotide exchange. Immobilization of the converter enables RuvB to convert the ATP-contained energy into a lever motion, pulling 2 nucleotides of DNA out of the RuvA tetramer per ATP hydrolyzed, thus driving DNA branch migration. The RuvB motors rotate together with the DNA substrate, which together with the progressing nucleotide cycle form the mechanistic basis for DNA recombination by continuous HJ branch migration. Branch migration allows RuvC to scan DNA until it finds its consensus sequence, where it cleaves and resolves cruciform DNA. In Chloroflexus aggregans (strain MD-66 / DSM 9485), this protein is Holliday junction branch migration complex subunit RuvB.